Consider the following 667-residue polypeptide: MQGQKNSVEQLADVFGFDHASSSGNPVMDQQGYWNNILGSVESHNLQGYQVNRSDGTIPYGNGVHQNGTFLGFWESGEASASGSSLHFGGSNEIKAEQRNIGGGLRIGERRLVAERNLSLDNVDIGLNINGNDLSGENSNVNGASQGSELHGGCSHTGSNGQASELRLHPYRTFILGADQPEPFNSLNGSENPLGDFSLMPEGIDQRPGSSLDGRRLACKRKNIEGVNGQCSAGASTSFSHRNDSIFHNIASSSHNPSPSTNLPSPNCLLVPSTLDEQLPRYGATTAGLSSSSYDPSGGNNNSGGSQRSFRPRTSLAQHIGPYGVWPSSSTIRHSNSWNHQPPPFQSSFDEPPEVIPVVSSLNFQYQHPMNVVPGIPQMSHRFTGPGASSSRTGNLENRIIGSEEFSARNVVATSFPDAVPPAALDMRHLIPEPSSWNVDGRATTIPGNVPSSSRANTNSMVNPPAGSPFIAHQNLHRRNPRNLSEEISRLSGALRGHQHPRLRSGFLLERQGDGVWGVPLSTRSREGRRLIEIRNALEMIHRGENVRFESIFYGGVDIHDRHRDMRLDIDNMSYEELLALEERIGNVSTGLSEEEVTKLLKQRKFSSWRLEASVEEEPCCICQEEYVDGDDLGTLDCGHDFHVGCVRQWLVVKNTCPICKNTALKS.

Disordered regions lie at residues 142-163 and 285-311; these read NGASQGSELHGGCSHTGSNGQA and TTAGLSSSSYDPSGGNNNSGGSQRSFR. Low complexity predominate over residues 288–309; sequence GLSSSSYDPSGGNNNSGGSQRS. The RING-type; atypical zinc-finger motif lies at 620–661; the sequence is CCICQEEYVDGDDLGTLDCGHDFHVGCVRQWLVVKNTCPICK.

Belongs to the RING-type zinc finger family. In terms of assembly, interacts with HAL3.

The enzyme catalyses S-ubiquitinyl-[E2 ubiquitin-conjugating enzyme]-L-cysteine + [acceptor protein]-L-lysine = [E2 ubiquitin-conjugating enzyme]-L-cysteine + N(6)-ubiquitinyl-[acceptor protein]-L-lysine.. It participates in protein modification; protein ubiquitination. In terms of biological role, probable E3 ubiquitin-protein ligase that functions downstream of HAL3 and is required for HAL3-regulated plant growth. Activation of HIP1 by HAL3 may lead to the degradation of cell cycle suppressors, resulting in enhancement of cell division and plant growth. This is Probable E3 ubiquitin-protein ligase HIP1 (HIP1) from Oryza sativa subsp. japonica (Rice).